A 365-amino-acid chain; its full sequence is Protein RecA (365 aa).

81 to 88 (GPESSGKT) is a binding site for ATP.

Belongs to the RecA family.

Its subcellular location is the cytoplasm. Its function is as follows. Can catalyze the hydrolysis of ATP in the presence of single-stranded DNA, the ATP-dependent uptake of single-stranded DNA by duplex DNA, and the ATP-dependent hybridization of homologous single-stranded DNAs. It interacts with LexA causing its activation and leading to its autocatalytic cleavage. The sequence is that of Protein RecA from Borreliella burgdorferi (strain ATCC 35210 / DSM 4680 / CIP 102532 / B31) (Borrelia burgdorferi).